Here is a 195-residue protein sequence, read N- to C-terminus: Peroxiredoxin bcp1 (195 aa).

A Thioredoxin domain is found at 46-168; the sequence is IQVGDVIPDI…SHWIFEKGTG (123 aa). Cysteine 89 functions as the Cysteine sulfenic acid (-SOH) intermediate in the catalytic mechanism. A disulfide bridge links cysteine 89 with cysteine 94.

The protein belongs to the peroxiredoxin family. BCP/PrxQ subfamily. As to quaternary structure, monomer. In terms of processing, the active site is a conserved redox-active cysteine residue, the peroxidatic cysteine (C(P)), which makes the nucleophilic attack on the peroxide substrate. The peroxide oxidizes the C(P)-SH to cysteine sulfenic acid (C(P)-SOH), which then reacts with another cysteine residue, the resolving cysteine (C(R)), to form a disulfide bridge. The disulfide is subsequently reduced by an appropriate electron donor to complete the catalytic cycle. In this atypical 2-Cys peroxiredoxin, C(R) is present in the same subunit to form an intramolecular disulfide. The disulfide is subsequently reduced by thioredoxin.

The protein resides in the cytoplasm. The protein localises to the nucleus. The enzyme catalyses a hydroperoxide + [thioredoxin]-dithiol = an alcohol + [thioredoxin]-disulfide + H2O. Functionally, thiol-specific peroxidase that catalyzes the reduction of hydrogen peroxide and organic hydroperoxides to water and alcohols, respectively. Plays a role in cell protection against oxidative stress by detoxifying peroxides and as sensor of hydrogen peroxide-mediated signaling events. Acts as a scavenger of H(2)O(2). The protein is Peroxiredoxin bcp1 (bcp1) of Schizosaccharomyces pombe (strain 972 / ATCC 24843) (Fission yeast).